The sequence spans 329 residues: UDP-3-O-acylglucosamine N-acyltransferase (329 aa).

Histidine 224 functions as the Proton acceptor in the catalytic mechanism.

The protein belongs to the transferase hexapeptide repeat family. LpxD subfamily. Homotrimer.

It carries out the reaction a UDP-3-O-[(3R)-3-hydroxyacyl]-alpha-D-glucosamine + a (3R)-hydroxyacyl-[ACP] = a UDP-2-N,3-O-bis[(3R)-3-hydroxyacyl]-alpha-D-glucosamine + holo-[ACP] + H(+). The protein operates within bacterial outer membrane biogenesis; LPS lipid A biosynthesis. Catalyzes the N-acylation of UDP-3-O-acylglucosamine using 3-hydroxyacyl-ACP as the acyl donor. Is involved in the biosynthesis of lipid A, a phosphorylated glycolipid that anchors the lipopolysaccharide to the outer membrane of the cell. The chain is UDP-3-O-acylglucosamine N-acyltransferase from Albidiferax ferrireducens (strain ATCC BAA-621 / DSM 15236 / T118) (Rhodoferax ferrireducens).